The following is a 27-amino-acid chain: Metallothionein-like protein CAP5 (27 aa).

A compositionally biased stretch (low complexity) spans 1–18; it reads MAPCSCKSCGTSCAGSCT. The interval 1–27 is disordered; sequence MAPCSCKSCGTSCAGSCTSCSCGSCSH. Cu(+) contacts are provided by Cys-4, Cys-6, Cys-9, Cys-13, Cys-20, Cys-22, and Cys-25.

It belongs to the metallothionein superfamily. Type 8 family.

This chain is Metallothionein-like protein CAP5 (CAP5), found in Colletotrichum gloeosporioides (Anthracnose fungus).